Here is a 670-residue protein sequence, read N- to C-terminus: Probable Na(+)/H(+) antiporter nhx-3 (670 aa).

The next 8 membrane-spanning stretches (helical) occupy residues 41-61 (VYVITTWLLVASLAKILFNLM), 73-93 (LLIIVGLGLGYFLNQTTLSGV), 97-117 (SHAFFLYLLPPIIFDAGYFMP), 129-149 (LVFSVLGTLWNTFAIGGSLLI), 164-184 (EILVFSALISAVDPVAVIAIF), 192-212 (FLFINVFGEALFNDGVTVVLY), 235-255 (GLSFFVVALGGAAIGIIFAIA), and 268-288 (ILAPVFIFLLPYMAYLTAEMV). Asn310 is a glycosylation site (N-linked (GlcNAc...) asparagine). A run of 4 helical transmembrane segments spans residues 325-345 (MLAQCSETVIFMFLGLSTLTS), 351-371 (FIFIGATLVFCLIYRAIGIIV), 390-410 (FILSYGGLRGAIAYGLVVSIP), and 418-438 (MFITTTICVIYFTVFLQGITI). The interval 648–670 (GDLKGHCGTSRKPKHSMFELRHV) is disordered.

The protein belongs to the monovalent cation:proton antiporter 1 (CPA1) transporter (TC 2.A.36) family. Post-translationally, phosphorylated. Expressed in hypodermal cells of the main body syncytium, ut1 cells of the vulva and the spermathecal junction cell.

The protein resides in the endomembrane system. Functionally, plays a role in epithelial membrane transport processes. The sequence is that of Probable Na(+)/H(+) antiporter nhx-3 (nhx-3) from Caenorhabditis elegans.